Consider the following 283-residue polypeptide: Acetylglutamate kinase (283 aa).

Residues 63–64, arginine 85, and asparagine 178 contribute to the substrate site; that span reads GG.

This sequence belongs to the acetylglutamate kinase family. ArgB subfamily.

It is found in the cytoplasm. It catalyses the reaction N-acetyl-L-glutamate + ATP = N-acetyl-L-glutamyl 5-phosphate + ADP. It participates in amino-acid biosynthesis; L-arginine biosynthesis; N(2)-acetyl-L-ornithine from L-glutamate: step 2/4. Functionally, catalyzes the ATP-dependent phosphorylation of N-acetyl-L-glutamate. In Prochlorococcus marinus (strain MIT 9215), this protein is Acetylglutamate kinase.